Here is a 306-residue protein sequence, read N- to C-terminus: Ornithine carbamoyltransferase (306 aa).

Residues Ser-53–Thr-56, Gln-80, Arg-104, and His-131–Gln-134 each bind carbamoyl phosphate. L-ornithine is bound by residues Asn-162, Asp-219, and Ser-223–Met-224. Carbamoyl phosphate is bound by residues Cys-259–Leu-260 and Arg-287.

Belongs to the aspartate/ornithine carbamoyltransferase superfamily. OTCase family.

It is found in the cytoplasm. The enzyme catalyses carbamoyl phosphate + L-ornithine = L-citrulline + phosphate + H(+). The protein operates within amino-acid biosynthesis; L-arginine biosynthesis; L-arginine from L-ornithine and carbamoyl phosphate: step 1/3. Functionally, reversibly catalyzes the transfer of the carbamoyl group from carbamoyl phosphate (CP) to the N(epsilon) atom of ornithine (ORN) to produce L-citrulline. The sequence is that of Ornithine carbamoyltransferase from Acinetobacter baumannii (strain ATCC 17978 / DSM 105126 / CIP 53.77 / LMG 1025 / NCDC KC755 / 5377).